The chain runs to 87 residues: MKNFDSLYHELAERAEKRPEGSGTVAALNSSLHTLGKKVIEEAGEVWLAAEYQSDAELAEEISQLMYWAQVIMIKRGLTPEDIYKYL.

Belongs to the PRA-PH family.

It localises to the cytoplasm. It catalyses the reaction 1-(5-phospho-beta-D-ribosyl)-ATP + H2O = 1-(5-phospho-beta-D-ribosyl)-5'-AMP + diphosphate + H(+). The protein operates within amino-acid biosynthesis; L-histidine biosynthesis; L-histidine from 5-phospho-alpha-D-ribose 1-diphosphate: step 2/9. The chain is Phosphoribosyl-ATP pyrophosphatase from Corynebacterium diphtheriae (strain ATCC 700971 / NCTC 13129 / Biotype gravis).